We begin with the raw amino-acid sequence, 317 residues long: Carbonic anhydrase 5B, mitochondrial (317 aa).

The transit peptide at 1–33 directs the protein to the mitochondrion; it reads MAVMNHLRVILQVSSSTLPWRRCWVPRLVPRRS. Positions 37–296 constitute an Alpha-carbonic anhydrase domain; it reads YTCTYRTRNR…LMNRTVRSSF (260 aa). Zn(2+) is bound by residues H130, H132, and H155. 235–236 lines the substrate pocket; sequence TT.

The protein belongs to the alpha-carbonic anhydrase family. Zn(2+) serves as cofactor. In terms of tissue distribution, expressed in the heart, liver, lung, kidney, testis, and skeletal muscle (at protein level).

It is found in the mitochondrion. It catalyses the reaction hydrogencarbonate + H(+) = CO2 + H2O. In terms of biological role, mitochondrial carbonic anhydrase that catalyzes the reversible conversion of carbon dioxide to bicarbonate/HCO3. This Mus musculus (Mouse) protein is Carbonic anhydrase 5B, mitochondrial (Ca5b).